The chain runs to 359 residues: 3-dehydroquinate synthase (359 aa).

Residues 70-75, 105-109, 129-130, Lys-142, Lys-151, and 169-172 contribute to the NAD(+) site; these read DGEQYK, GVIGD, TT, and FYKT. 3 residues coordinate Zn(2+): Glu-184, His-247, and His-264.

It belongs to the sugar phosphate cyclases superfamily. Dehydroquinate synthase family. Requires Co(2+) as cofactor. It depends on Zn(2+) as a cofactor. The cofactor is NAD(+).

It localises to the cytoplasm. It catalyses the reaction 7-phospho-2-dehydro-3-deoxy-D-arabino-heptonate = 3-dehydroquinate + phosphate. It participates in metabolic intermediate biosynthesis; chorismate biosynthesis; chorismate from D-erythrose 4-phosphate and phosphoenolpyruvate: step 2/7. In terms of biological role, catalyzes the conversion of 3-deoxy-D-arabino-heptulosonate 7-phosphate (DAHP) to dehydroquinate (DHQ). In Francisella tularensis subsp. mediasiatica (strain FSC147), this protein is 3-dehydroquinate synthase.